We begin with the raw amino-acid sequence, 466 residues long: Ribulose bisphosphate carboxylase large chain (466 aa).

K5 carries the post-translational modification N6,N6,N6-trimethyllysine. The substrate site is built by N114 and T164. K166 functions as the Proton acceptor in the catalytic mechanism. K168 contacts substrate. 3 residues coordinate Mg(2+): K192, D194, and E195. Residue K192 is modified to N6-carboxylysine. H285 serves as the catalytic Proton acceptor. Substrate contacts are provided by R286, H318, and S370.

The protein belongs to the RuBisCO large chain family. Type I subfamily. Heterohexadecamer of 8 large chains and 8 small chains; disulfide-linked. The disulfide link is formed within the large subunit homodimers. Mg(2+) serves as cofactor. In terms of processing, the disulfide bond which can form in the large chain dimeric partners within the hexadecamer appears to be associated with oxidative stress and protein turnover.

It localises to the plastid. The protein localises to the chloroplast. The enzyme catalyses 2 (2R)-3-phosphoglycerate + 2 H(+) = D-ribulose 1,5-bisphosphate + CO2 + H2O. It catalyses the reaction D-ribulose 1,5-bisphosphate + O2 = 2-phosphoglycolate + (2R)-3-phosphoglycerate + 2 H(+). In terms of biological role, ruBisCO catalyzes two reactions: the carboxylation of D-ribulose 1,5-bisphosphate, the primary event in carbon dioxide fixation, as well as the oxidative fragmentation of the pentose substrate in the photorespiration process. Both reactions occur simultaneously and in competition at the same active site. This chain is Ribulose bisphosphate carboxylase large chain, found in Betula nigra (River birch).